Consider the following 60-residue polypeptide: Large ribosomal subunit protein uL30 (60 aa).

The protein belongs to the universal ribosomal protein uL30 family. Part of the 50S ribosomal subunit.

The polypeptide is Large ribosomal subunit protein uL30 (Aromatoleum aromaticum (strain DSM 19018 / LMG 30748 / EbN1) (Azoarcus sp. (strain EbN1))).